Consider the following 91-residue polypeptide: MRNYEITNILREGNVEETKSAVKELLSKYNFTIQGEEDWGSKRLWHPVGQDEQGHFTLIKCSGSPTEVAKIEHEFKLNVNILKTLVIRANG.

The protein belongs to the bacterial ribosomal protein bS6 family.

Binds together with bS18 to 16S ribosomal RNA. The polypeptide is Small ribosomal subunit protein bS6 (Leptospira biflexa serovar Patoc (strain Patoc 1 / Ames)).